The sequence spans 278 residues: Small ribosomal subunit protein uS9m (278 aa).

Residues 1 to 10 constitute a mitochondrion transit peptide; it reads MFSRLSLFRR. Residues 259–278 form a disordered region; it reads VERKKPGKKKARKMPTWVKR.

Belongs to the universal ribosomal protein uS9 family. In terms of assembly, component of the mitochondrial small ribosomal subunit (mt-SSU). Mature yeast 74S mitochondrial ribosomes consist of a small (37S) and a large (54S) subunit. The 37S small subunit contains a 15S ribosomal RNA (15S mt-rRNA) and 34 different proteins. The 54S large subunit contains a 21S rRNA (21S mt-rRNA) and 46 different proteins.

Its subcellular location is the mitochondrion. Its function is as follows. Component of the mitochondrial ribosome (mitoribosome), a dedicated translation machinery responsible for the synthesis of mitochondrial genome-encoded proteins, including at least some of the essential transmembrane subunits of the mitochondrial respiratory chain. The mitoribosomes are attached to the mitochondrial inner membrane and translation products are cotranslationally integrated into the membrane. The polypeptide is Small ribosomal subunit protein uS9m (MRPS9) (Saccharomyces cerevisiae (strain ATCC 204508 / S288c) (Baker's yeast)).